Here is an 84-residue protein sequence, read N- to C-terminus: MRWGRRDDRDTGKILRNRSRNRFNIYHYVSTVKKVKETERELLRLTQTWKAIRLISYNSVGISINRLTSRLIHKLHELLNGLIS.

Its function is as follows. This protein may be involved in virus assembly. This is an uncharacterized protein from Saccharolobus solfataricus (Sulfolobus solfataricus).